The sequence spans 282 residues: Bis(5'-nucleosyl)-tetraphosphatase, symmetrical (282 aa).

Belongs to the Ap4A hydrolase family.

It catalyses the reaction P(1),P(4)-bis(5'-adenosyl) tetraphosphate + H2O = 2 ADP + 2 H(+). Functionally, hydrolyzes diadenosine 5',5'''-P1,P4-tetraphosphate to yield ADP. This chain is Bis(5'-nucleosyl)-tetraphosphatase, symmetrical, found in Salmonella agona (strain SL483).